We begin with the raw amino-acid sequence, 91 residues long: Probable Fe(2+)-trafficking protein (91 aa).

This sequence belongs to the Fe(2+)-trafficking protein family.

In terms of biological role, could be a mediator in iron transactions between iron acquisition and iron-requiring processes, such as synthesis and/or repair of Fe-S clusters in biosynthetic enzymes. The protein is Probable Fe(2+)-trafficking protein of Tolumonas auensis (strain DSM 9187 / NBRC 110442 / TA 4).